Consider the following 558-residue polypeptide: Putative ABC transporter ATP-binding protein SMU_1934c (558 aa).

ABC transporter domains are found at residues 5-246 (IEFK…GIRE) and 295-527 (FDIQ…ANLK). Residues 39–46 (GPSGSGKS) and 328–335 (GKNGAGKS) contribute to the ATP site.

It belongs to the ABC transporter superfamily.

The protein localises to the cell membrane. Probably part of an ABC transporter complex. Responsible for energy coupling to the transport system. This Streptococcus mutans serotype c (strain ATCC 700610 / UA159) protein is Putative ABC transporter ATP-binding protein SMU_1934c (sdcBA).